Reading from the N-terminus, the 355-residue chain is MIEKLQVIEEKYLELEKKISDPEIINNNQEWQKLMKEHSNLQPIVEKFREYKRIIKTIEEAEELLDTNLDEDFEKLVKEELNQAKEQKEIVERELKILLLPKDPNDEKNVIMEIRAGAGGEEAALFAAELFRMYSRYAERKNWKVEVMSTSESDLDGFKEVIFMISGKGAYSRLKYESGVHRVQRVPVTESGGRIHTSTATVAVLPEVEDVEVEIREEDLEIETFRAGGAGGQHVNKTESAVRITHKPTGIVVSCQDERSQHANRDRAMKILRARLYDYYQSLQQKEIESQRRSQVGTGDRSERIRTYNFPQGRVTDHRIGLTLYKLEQVLDGDLDEIIDALITHFQTERLKEVG.

Gln-233 carries the N5-methylglutamine modification.

Belongs to the prokaryotic/mitochondrial release factor family. Methylated by PrmC. Methylation increases the termination efficiency of RF1.

The protein localises to the cytoplasm. In terms of biological role, peptide chain release factor 1 directs the termination of translation in response to the peptide chain termination codons UAG and UAA. The polypeptide is Peptide chain release factor 1 (Caldicellulosiruptor saccharolyticus (strain ATCC 43494 / DSM 8903 / Tp8T 6331)).